The sequence spans 697 residues: Elongation factor G (697 aa).

The 276-residue stretch at 10–285 (AKTRNIGIMA…GVIDYLPSPL (276 aa)) folds into the tr-type G domain. Residues 19 to 26 (AHIDAGKT), 83 to 87 (DTPGH), and 137 to 140 (NKMD) each bind GTP.

Belongs to the TRAFAC class translation factor GTPase superfamily. Classic translation factor GTPase family. EF-G/EF-2 subfamily.

Its subcellular location is the cytoplasm. Functionally, catalyzes the GTP-dependent ribosomal translocation step during translation elongation. During this step, the ribosome changes from the pre-translocational (PRE) to the post-translocational (POST) state as the newly formed A-site-bound peptidyl-tRNA and P-site-bound deacylated tRNA move to the P and E sites, respectively. Catalyzes the coordinated movement of the two tRNA molecules, the mRNA and conformational changes in the ribosome. This chain is Elongation factor G, found in Lactobacillus helveticus (strain DPC 4571).